Consider the following 134-residue polypeptide: ATP synthase epsilon chain (134 aa).

The protein belongs to the ATPase epsilon chain family. F-type ATPases have 2 components, CF(1) - the catalytic core - and CF(0) - the membrane proton channel. CF(1) has five subunits: alpha(3), beta(3), gamma(1), delta(1), epsilon(1). CF(0) has three main subunits: a, b and c.

The protein resides in the cell membrane. In terms of biological role, produces ATP from ADP in the presence of a proton gradient across the membrane. The protein is ATP synthase epsilon chain of Staphylococcus aureus (strain USA300).